A 597-amino-acid polypeptide reads, in one-letter code: Elongation factor 4 (597 aa).

The tr-type G domain maps to 2 to 184 (QNIRNFSIIA…DIVKKIPAPE (183 aa)). GTP-binding positions include 14-19 (DHGKST) and 131-134 (NKID).

This sequence belongs to the TRAFAC class translation factor GTPase superfamily. Classic translation factor GTPase family. LepA subfamily.

It localises to the cell inner membrane. The catalysed reaction is GTP + H2O = GDP + phosphate + H(+). Functionally, required for accurate and efficient protein synthesis under certain stress conditions. May act as a fidelity factor of the translation reaction, by catalyzing a one-codon backward translocation of tRNAs on improperly translocated ribosomes. Back-translocation proceeds from a post-translocation (POST) complex to a pre-translocation (PRE) complex, thus giving elongation factor G a second chance to translocate the tRNAs correctly. Binds to ribosomes in a GTP-dependent manner. The polypeptide is Elongation factor 4 (Haemophilus ducreyi (strain 35000HP / ATCC 700724)).